The sequence spans 174 residues: Transcriptional repressor NrdR (174 aa).

A zinc finger spans residues 3–34 (CPFCQHNDTRVIDSRVSEDGTTIRRRRECEAC). Positions 49 to 139 (PTVVKSDGGR…VYRSFQDVAD (91 aa)) constitute an ATP-cone domain.

This sequence belongs to the NrdR family. Zn(2+) serves as cofactor.

Negatively regulates transcription of bacterial ribonucleotide reductase nrd genes and operons by binding to NrdR-boxes. This is Transcriptional repressor NrdR from Xanthomonas axonopodis pv. citri (strain 306).